A 187-amino-acid polypeptide reads, in one-letter code: UPF0301 protein HSM_1900 (187 aa).

Belongs to the UPF0301 (AlgH) family.

The chain is UPF0301 protein HSM_1900 from Histophilus somni (strain 2336) (Haemophilus somnus).